The primary structure comprises 304 residues: Protein YIF1B (304 aa).

At 1–146 (MMEYPNQSGF…APRFDINAPD (146 aa)) the chain is on the cytoplasmic side. The tract at residues 21-54 (MRGSAMEPSDPTQLFDDTSSGVNKHEPGRVGKSP) is disordered. A compositionally biased stretch (polar residues) spans 30–42 (DPTQLFDDTSSGV). A helical transmembrane segment spans residues 147–167 (LYIPVMGFITYVLVAGLALGT). At 168–182 (QNRFSPEILGIQASS) the chain is on the extracellular side. A helical transmembrane segment spans residues 183–203 (ALVWLIIEVLAVLLSLYLVTV). Topologically, residues 204 to 212 (NTDLTTIDL) are cytoplasmic. The helical transmembrane segment at 213-233 (VAFSGYKYVGMIVGVVAGLLF) threads the bilayer. Topologically, residues 234–236 (GRT) are extracellular. Residues 237-257 (GYYLALLWFCASIFVFTIRTL) traverse the membrane as a helical segment. The Cytoplasmic segment spans residues 258–282 (RLKILSEAAAEGRLVRGTKNQLRMY). The chain crosses the membrane as a helical span at residues 283–303 (LTMAIAAAQPVFMYWLTFHLV). Arginine 304 is a topological domain (extracellular).

Belongs to the YIF1 family.

The protein localises to the endoplasmic reticulum membrane. Its subcellular location is the golgi apparatus membrane. It is found in the endoplasmic reticulum-Golgi intermediate compartment membrane. Functions in endoplasmic reticulum to Golgi vesicle-mediated transport and regulates the proper organization of the endoplasmic reticulum and the Golgi. Plays a key role in targeting to neuronal dendrites receptors such as HTR1A. Plays also a role in primary cilium and sperm flagellum assembly probably through protein transport to these compartments. This chain is Protein YIF1B (yif1b), found in Danio rerio (Zebrafish).